A 105-amino-acid polypeptide reads, in one-letter code: Thioredoxin (105 aa).

Residues 2–105 enclose the Thioredoxin domain; that stretch reads VKQIESKYAF…KLEATINELI (104 aa). N6-acetyllysine is present on lysine 3. Lysine 8 bears the N6-succinyllysine mark. Residues cysteine 32 and cysteine 35 each act as nucleophile in the active site. The cysteines at positions 32 and 35 are disulfide-linked. Lysine 39 carries the N6-acetyllysine modification. An S-nitrosocysteine mark is found at cysteine 62 and cysteine 69. Cysteine 73 carries the post-translational modification S-nitrosocysteine; alternate. Residue lysine 94 is modified to N6-acetyllysine; alternate. At lysine 94 the chain carries N6-succinyllysine; alternate.

Belongs to the thioredoxin family. As to quaternary structure, homodimer; disulfide-linked. Interacts with TXNIP through the redox-active site. Interacts with MAP3K5 and CASP3. Interacts with APEX1; the interaction stimulates the FOS/JUN AP-1 DNA-binding activity in a redox-dependent manner. In terms of processing, in the fully reduced protein, both Cys-69 and Cys-73 are nitrosylated in response to nitric oxide (NO). When two disulfide bonds are present in the protein, only Cys-73 is nitrosylated. Cys-73 can serve as donor for nitrosylation of target proteins. As to expression, erythrocytes.

Its subcellular location is the nucleus. The protein localises to the cytoplasm. It localises to the secreted. Participates in various redox reactions through the reversible oxidation of its active center dithiol to a disulfide and catalyzes dithiol-disulfide exchange reactions. Plays a role in the reversible S-nitrosylation of cysteine residues in target proteins, and thereby contributes to the response to intracellular nitric oxide. Nitrosylates the active site Cys of CASP3 in response to nitric oxide (NO), and thereby inhibits caspase-3 activity. Induces the FOS/JUN AP-1 DNA binding activity in ionizing radiation (IR) cells through its oxidation/reduction status and stimulates AP-1 transcriptional activity. This chain is Thioredoxin (TXN), found in Sus scrofa (Pig).